The chain runs to 490 residues: Glucose-6-phosphate 1-dehydrogenase (490 aa).

Residues arginine 48, 90–91 (DI), and lysine 145 each bind NADP(+). Positions 175, 179, 213, and 232 each coordinate substrate. Catalysis depends on histidine 237, which acts as the Proton acceptor. Residues lysine 340 and lysine 345 each coordinate substrate.

The protein belongs to the glucose-6-phosphate dehydrogenase family.

It catalyses the reaction D-glucose 6-phosphate + NADP(+) = 6-phospho-D-glucono-1,5-lactone + NADPH + H(+). The protein operates within carbohydrate degradation; pentose phosphate pathway; D-ribulose 5-phosphate from D-glucose 6-phosphate (oxidative stage): step 1/3. Its function is as follows. Catalyzes the oxidation of glucose 6-phosphate to 6-phosphogluconolactone. The sequence is that of Glucose-6-phosphate 1-dehydrogenase from Buchnera aphidicola subsp. Baizongia pistaciae (strain Bp).